The sequence spans 357 residues: Membrane-bound lytic murein transglycosylase C (357 aa).

The N-terminal stretch at 1 to 17 (MKLKKFLVLLLIPFLYA) is a signal peptide. Cysteine 18 is lipidated: N-palmitoyl cysteine. Cysteine 18 carries the S-diacylglycerol cysteine lipid modification.

Belongs to the transglycosylase Slt family.

It localises to the cell outer membrane. It carries out the reaction Exolytic cleavage of the (1-&gt;4)-beta-glycosidic linkage between N-acetylmuramic acid (MurNAc) and N-acetylglucosamine (GlcNAc) residues in peptidoglycan, from either the reducing or the non-reducing ends of the peptidoglycan chains, with concomitant formation of a 1,6-anhydrobond in the MurNAc residue.. Murein-degrading enzyme. May play a role in recycling of muropeptides during cell elongation and/or cell division. The polypeptide is Membrane-bound lytic murein transglycosylase C (Mannheimia succiniciproducens (strain KCTC 0769BP / MBEL55E)).